The sequence spans 905 residues: MQGNERIQDKNEKEKAYAPYLDGASVSTDNGPILSVFALQEIMQKIRQNQSDMAAHAPDVDGAIPEVMTIISGIKGLLEEKDYKVINAPPNSFRTIPMQSTEYVLQVNTFYERMSEIGGPIDETDPIGFYALILEKLKFLKSEGAFILQGIATKDYRGAEIADPEIIGVSFQNALSHLAAIDRQIIQDTLNGMIIENGLVADRNVDVFRAAMSDPIYRIHNVLQGYIEGIQYGELRESVNWLMRLGLRKRIEFANDFLTDFRRADTIWIISQRLPINANVIWNVPRCHIANLITNVALCLPTGEYLMPNPRINSITITQRITQTNPFSIISGLTPTAVQMNDVRKIYLALMFPNQIILDIKPDSSHAVDPVLRMVAGVLGHVMFTYGPIMTNITPTMAELLDRALSDYLLYMYNNRIPINYGPTGQPLDFRIGARNQYDCNAFRADPQTGRGYNGWGVVDVQRVQPSPYDHVQRVIRYCDIDSREIIDPRTYGMNMTYPIFREMLRMLVAAGKDQEAAYLRQMLPFHMIRFARINQIINEDLLSAFSLPDQNFDVVLHNFIQGNFGETDPVVLEVSWASIWFAFVRRFEPIARSDLLEAAPLIEARYAAELSTMQMDVQQLRMMRARVPDTVINATPSQCWKAVLKNAPEPIKNLMNLSHSFSFVNVRDIVRWSQQRDIQESLAYVLNREAWAIANDFEDLMLVDHVYIQRTMLPEPRLDDINEFRRQGFFYTNMIDGAPPIGDVTHYTYAIANLQANMGQFRAAIRRTLDDNGWIQFGGMLRNIKIKFFDSRPPDEILTAMPYVYTEEERDGVRMVAFKYATTATAYFLLYNVAYSNTPDTLITVNPTFTMTKIHMRKKIVRRVRAPDVVSQVNKRLVAYKGKMRLMDVTKCLKTGVQLARPTI.

This sequence belongs to the orbivirus VP3 family.

It is found in the virion. The VP3 protein is one of the five proteins (with VP1, VP4, VP6 and VP7) which form the inner capsid of the virus. The polypeptide is Core protein VP3 (Segment-3) (African horse sickness virus (AHSV)).